The primary structure comprises 275 residues: MVNYSSISCIFFVALFSIFTIVSISSAASSHGEVEDEREFNYKKNDEKGPERWGELKPEWEMCGKGEMQSPIDLMNERVNIVSHLGRLNRDYNPSNATLKNRGHDIMLKFEDGAGTIKINGFEYELQQLHWHSPSEHTINGRRFALELHMVHEGRNRRMAVVTVLYKIGRADTFIRSLEKELEGIAEMEEAEKNVGMIDPTKIKIGSRKYYRYTGSLTTPPCTQNVTWSVVRKVRTVTRKQVKLLRVAVHDDANSNARPVQPTNKRIVHLYRPIV.

The first 27 residues, 1–27 (MVNYSSISCIFFVALFSIFTIVSISSA), serve as a signal peptide directing secretion. Residues Asn3 and Asn96 are each glycosylated (N-linked (GlcNAc...) asparagine). The 235-residue stretch at 38–272 (REFNYKKNDE…TNKRIVHLYR (235 aa)) folds into the Alpha-carbonic anhydrase domain. Cys63 and Cys222 are joined by a disulfide. His104 serves as the catalytic Proton acceptor. 3 residues coordinate Zn(2+): His130, His132, and His149. Residue 218–219 (TT) coordinates substrate. Asn225 carries N-linked (GlcNAc...) asparagine glycosylation.

It belongs to the alpha-class carbonic anhydrase family. Zn(2+) is required as a cofactor. In terms of processing, N-glycosylated.

It localises to the plastid. The protein localises to the chloroplast stroma. The enzyme catalyses hydrogencarbonate + H(+) = CO2 + H2O. Reversible hydration of carbon dioxide. This chain is Alpha carbonic anhydrase 7 (ACA7), found in Arabidopsis thaliana (Mouse-ear cress).